Reading from the N-terminus, the 245-residue chain is tRNA (guanine-N(1)-)-methyltransferase (245 aa).

S-adenosyl-L-methionine-binding positions include Gly-111 and Ile-131–Leu-136.

This sequence belongs to the RNA methyltransferase TrmD family. In terms of assembly, homodimer.

It is found in the cytoplasm. It catalyses the reaction guanosine(37) in tRNA + S-adenosyl-L-methionine = N(1)-methylguanosine(37) in tRNA + S-adenosyl-L-homocysteine + H(+). Specifically methylates guanosine-37 in various tRNAs. This is tRNA (guanine-N(1)-)-methyltransferase from Staphylococcus haemolyticus (strain JCSC1435).